We begin with the raw amino-acid sequence, 318 residues long: Protein-L-histidine N-pros-methyltransferase (318 aa).

Positions 1–18 (MRLLAGWLCLSLASVWLA) are cleaved as a signal peptide. Asn35 is a glycosylation site (N-linked (GlcNAc...) asparagine). S-adenosyl-L-homocysteine-binding residues include Glu174, Asn210, and Tyr295.

It belongs to the METTL9 family.

The protein resides in the endoplasmic reticulum. The protein localises to the mitochondrion. The enzyme catalyses L-histidyl-[protein] + S-adenosyl-L-methionine = N(pros)-methyl-L-histidyl-[protein] + S-adenosyl-L-homocysteine + H(+). Its function is as follows. Protein-histidine N-methyltransferase that specifically catalyzes 1-methylhistidine (pros-methylhistidine) methylation of target proteins. Specifically methylates the second His of proteins with a His-x-His (HxH) motif (where 'x' is preferably a small amino acid), while exploiting the first one as a recognition signature. Catalyzes methylation of target proteins such as S100A9, NDUFB3, SLC39A5, SLC39A7, ARMC6 and DNAJB12; 1-methylhistidine modification may affect the binding of zinc and other metals to its target proteins. Constitutes the main methyltransferase for the 1-methylhistidine modification in cell. This Homo sapiens (Human) protein is Protein-L-histidine N-pros-methyltransferase.